Reading from the N-terminus, the 602-residue chain is Elongation factor 4 (602 aa).

A tr-type G domain is found at 7-189 (KYIRNFCIIA…KIVDMIPCPE (183 aa)). GTP is bound by residues 19 to 24 (DHGKST) and 136 to 139 (NKID).

It belongs to the TRAFAC class translation factor GTPase superfamily. Classic translation factor GTPase family. LepA subfamily.

The protein localises to the cell membrane. The enzyme catalyses GTP + H2O = GDP + phosphate + H(+). In terms of biological role, required for accurate and efficient protein synthesis under certain stress conditions. May act as a fidelity factor of the translation reaction, by catalyzing a one-codon backward translocation of tRNAs on improperly translocated ribosomes. Back-translocation proceeds from a post-translocation (POST) complex to a pre-translocation (PRE) complex, thus giving elongation factor G a second chance to translocate the tRNAs correctly. Binds to ribosomes in a GTP-dependent manner. In Ruminiclostridium cellulolyticum (strain ATCC 35319 / DSM 5812 / JCM 6584 / H10) (Clostridium cellulolyticum), this protein is Elongation factor 4.